We begin with the raw amino-acid sequence, 238 residues long: uncharacterized protein (238 aa).

This is an uncharacterized protein from Rickettsia prowazekii (strain Madrid E).